A 360-amino-acid polypeptide reads, in one-letter code: MEHVVTCWRLKLLSWPVFLIWICLSLASVSLISWDQLPAFLIPSTGDSSLQTAKSRDSMKAPGRLLLLTLCILTFSAVCVFLCCWACLPLCLATCLDRHLPAAPRSTVPGPLHFSGYSSVPDGKPLIRELCHSCAVVSNSGQMLGSGLGAQIDGAECVLRMNQAPTVGFEEDVGQRTTLRVISHTSVPLLLRNYSHYFQHARDTLYVVWGQGRHMDRVLGGRTYRTLLQLTRMYPGLQVYTFTERMMAYCDQIFQDETGKNRRQSGSFLSTGWFTMIPALELCEEIVVYGMVSDSYCSEKSPRSVPYHYFEKGRLDECQMYRLHEQAPRSAHRFITEKAVFSRWAKKRPIVFAHPSWRAK.

The Cytoplasmic portion of the chain corresponds to 1–71 (MEHVVTCWRL…PGRLLLLTLC (71 aa)). The chain crosses the membrane as a helical; Signal-anchor for type II membrane protein span at residues 72–94 (ILTFSAVCVFLCCWACLPLCLAT). Residues 95-360 (CLDRHLPAAP…VFAHPSWRAK (266 aa)) are Lumenal-facing. The cysteines at positions 134 and 283 are disulfide-linked. Asn-193 carries an N-linked (GlcNAc...) asparagine glycan.

The protein belongs to the glycosyltransferase 29 family. High expression in brain and colon and to a lesser extent in lung, heart, kidney, spleen and thymus.

The protein localises to the golgi apparatus membrane. The catalysed reaction is an alpha-Neu5Ac-(2-&gt;3)-beta-D-Gal-(1-&gt;3)-D-GlcNAc derivative + CMP-N-acetyl-beta-neuraminate = an alpha-Neu5Ac-(2-&gt;3)-beta-D-Gal-(1-&gt;3)-[alpha-Neu5Ac-(2-&gt;6)]-D-GlcNAc derivative + CMP + H(+). The enzyme catalyses N-acetyl-alpha-neuraminosyl-(2-&gt;3)-beta-D-galactosyl-(1-&gt;3)-N-acetyl-D-galactosamine + CMP-N-acetyl-beta-neuraminate = N-acetyl-alpha-neuraminosyl-(2-&gt;3)-beta-D-galactosyl-(1-&gt;3)-[N-acetyl-alpha-neuraminosyl-(2-&gt;6)]-N-acetyl-D-galactosamine + CMP + H(+). It carries out the reaction a ganglioside GM1b (d18:1(4E)) + CMP-N-acetyl-beta-neuraminate = a ganglioside GD1alpha (d18:1(4E)) + CMP + H(+). It catalyses the reaction 3-O-[alpha-Neu5Ac-(2-&gt;3)-beta-D-Gal-(1-&gt;3)-alpha-D-GalNAc]-L-Ser-[protein] + CMP-N-acetyl-beta-neuraminate = a 3-O-{alpha-Neu5Ac-(2-&gt;3)-beta-D-Gal-(1-&gt;3)-[alpha-Neu5Ac-(2-&gt;6)]-alpha-D-GalNAc}-L-seryl-[protein] + CMP + H(+). The catalysed reaction is 3-O-[alpha-Neu5Ac-(2-&gt;3)-beta-D-Gal-(1-&gt;3)-alpha-D-GalNAc]-L-Thr-[protein] + CMP-N-acetyl-beta-neuraminate = a 3-O-{alpha-Neu5Ac-(2-&gt;3)-beta-D-Gal-(1-&gt;3)-[alpha-Neu5Ac-(2-&gt;6)]-alpha-D-GalNAc}-L-threonyl-[protein] + CMP + H(+). The protein operates within protein modification; protein glycosylation. It participates in glycolipid biosynthesis. Functionally, transfers the sialyl group (N-acetyl-alpha-neuraminyl or NeuAc) from CMP-NeuAc to the GalNAc residue on the NeuAc-alpha-2,3-Gal-beta-1,3-GalNAc sequence of glycoproteins and glycolipids forming an alpha-2,6-linkage. Produces branched type disialyl structures by transfer of a sialyl group onto a GalNAc residue inside the backbone core chains. Prefers O-glycans to glycoproteins or glycolipids. This chain is Alpha-N-acetyl-neuraminyl-2,3-beta-galactosyl-1,3-N-acetyl-galactosaminide alpha-2,6-sialyltransferase (St6galnac4), found in Mus musculus (Mouse).